The primary structure comprises 158 residues: MAKRSIKSETSPELQLGRPVTAPDSPETARLDRVPNPQKDTDYLARFTVPEFTSLCPVTGQPDFAHLVIDYAPGPWLVESKSLKLYLASFRNHGAFHEDCTVAIGKRLATELKPKWLRIGGYWYPRGGIPIDVFWQTGKLPKGLWVPDQGVAPYRGRG.

The disordered stretch occupies residues 1 to 37 (MAKRSIKSETSPELQLGRPVTAPDSPETARLDRVPNP). Positions 27–37 (ETARLDRVPNP) are enriched in basic and acidic residues. C56 serves as the catalytic Thioimide intermediate. The active-site Proton donor is the D63. Residues 78-80 (VES) and 97-98 (HE) contribute to the substrate site.

It belongs to the GTP cyclohydrolase I family. QueF type 1 subfamily.

Its subcellular location is the cytoplasm. The catalysed reaction is 7-aminomethyl-7-carbaguanine + 2 NADP(+) = 7-cyano-7-deazaguanine + 2 NADPH + 3 H(+). It functions in the pathway tRNA modification; tRNA-queuosine biosynthesis. Catalyzes the NADPH-dependent reduction of 7-cyano-7-deazaguanine (preQ0) to 7-aminomethyl-7-deazaguanine (preQ1). In Bradyrhizobium sp. (strain BTAi1 / ATCC BAA-1182), this protein is NADPH-dependent 7-cyano-7-deazaguanine reductase.